A 369-amino-acid polypeptide reads, in one-letter code: Queuine tRNA-ribosyltransferase (369 aa).

Residue aspartate 89 is the Proton acceptor of the active site. Substrate is bound by residues 89-93 (DSGGF), aspartate 142, glutamine 184, and glycine 211. Positions 242–248 (GGGSPEL) are RNA binding. Residue aspartate 261 is the Nucleophile of the active site. The RNA binding; important for wobble base 34 recognition stretch occupies residues 266–270 (TRIAR). Zn(2+) contacts are provided by cysteine 299, cysteine 301, cysteine 304, and histidine 330.

It belongs to the queuine tRNA-ribosyltransferase family. Homodimer. Within each dimer, one monomer is responsible for RNA recognition and catalysis, while the other monomer binds to the replacement base PreQ1. Zn(2+) is required as a cofactor.

The catalysed reaction is 7-aminomethyl-7-carbaguanine + guanosine(34) in tRNA = 7-aminomethyl-7-carbaguanosine(34) in tRNA + guanine. It functions in the pathway tRNA modification; tRNA-queuosine biosynthesis. Catalyzes the base-exchange of a guanine (G) residue with the queuine precursor 7-aminomethyl-7-deazaguanine (PreQ1) at position 34 (anticodon wobble position) in tRNAs with GU(N) anticodons (tRNA-Asp, -Asn, -His and -Tyr). Catalysis occurs through a double-displacement mechanism. The nucleophile active site attacks the C1' of nucleotide 34 to detach the guanine base from the RNA, forming a covalent enzyme-RNA intermediate. The proton acceptor active site deprotonates the incoming PreQ1, allowing a nucleophilic attack on the C1' of the ribose to form the product. After dissociation, two additional enzymatic reactions on the tRNA convert PreQ1 to queuine (Q), resulting in the hypermodified nucleoside queuosine (7-(((4,5-cis-dihydroxy-2-cyclopenten-1-yl)amino)methyl)-7-deazaguanosine). This Thermotoga neapolitana (strain ATCC 49049 / DSM 4359 / NBRC 107923 / NS-E) protein is Queuine tRNA-ribosyltransferase.